Reading from the N-terminus, the 210-residue chain is Uracil phosphoribosyltransferase (210 aa).

5-phospho-alpha-D-ribose 1-diphosphate-binding positions include Arg80, Arg105, and 132–140 (DPMLATGGS). Uracil is bound by residues Ile195 and 200–202 (GDA). A 5-phospho-alpha-D-ribose 1-diphosphate-binding site is contributed by Asp201.

It belongs to the UPRTase family. Mg(2+) is required as a cofactor.

The catalysed reaction is UMP + diphosphate = 5-phospho-alpha-D-ribose 1-diphosphate + uracil. Its pathway is pyrimidine metabolism; UMP biosynthesis via salvage pathway; UMP from uracil: step 1/1. Allosterically activated by GTP. Its function is as follows. Catalyzes the conversion of uracil and 5-phospho-alpha-D-ribose 1-diphosphate (PRPP) to UMP and diphosphate. The protein is Uracil phosphoribosyltransferase of Deinococcus radiodurans (strain ATCC 13939 / DSM 20539 / JCM 16871 / CCUG 27074 / LMG 4051 / NBRC 15346 / NCIMB 9279 / VKM B-1422 / R1).